A 38-amino-acid polypeptide reads, in one-letter code: MTQSNPNEQNVELNRTSLYWGLLLIFVLAVLFSNYFFN.

The helical transmembrane segment at 17–37 threads the bilayer; sequence SLYWGLLLIFVLAVLFSNYFF.

Belongs to the PsbL family. In terms of assembly, PSII is composed of 1 copy each of membrane proteins PsbA, PsbB, PsbC, PsbD, PsbE, PsbF, PsbH, PsbI, PsbJ, PsbK, PsbL, PsbM, PsbT, PsbX, PsbY, PsbZ, Psb30/Ycf12, at least 3 peripheral proteins of the oxygen-evolving complex and a large number of cofactors. It forms dimeric complexes.

It localises to the plastid. The protein localises to the chloroplast thylakoid membrane. One of the components of the core complex of photosystem II (PSII). PSII is a light-driven water:plastoquinone oxidoreductase that uses light energy to abstract electrons from H(2)O, generating O(2) and a proton gradient subsequently used for ATP formation. It consists of a core antenna complex that captures photons, and an electron transfer chain that converts photonic excitation into a charge separation. This subunit is found at the monomer-monomer interface and is required for correct PSII assembly and/or dimerization. This Ananas comosus (Pineapple) protein is Photosystem II reaction center protein L.